The primary structure comprises 50 residues: Protein PndA (50 aa).

A helical membrane pass occupies residues Thr-5–Arg-25.

The protein belongs to the Hok/Gef family.

It localises to the cell inner membrane. In terms of biological role, toxic component of a type I toxin-antitoxin (TA) system. When expressed is involved in cellular Mg(2+) release and degradation of stable RNA. This Escherichia coli protein is Protein PndA (pndA).